A 132-amino-acid polypeptide reads, in one-letter code: Precursor of CEP10 (132 aa).

A signal peptide spans 1-19 (MKLFIIIVVTSLTISKVFD). A propeptide spanning residues 20–66 (KTLVTIEARNLRKMDRHEHFNANEDFVEAKMLKKIDNKNNLNNRCIN) is cleaved from the precursor. A hydroxyproline mark is found at Pro-70 and Pro-73. A propeptide spanning residues 82 to 91 (PKVINNKFTK) is cleaved from the precursor. Residues Pro-95, Pro-98, and Pro-102 each carry the hydroxyproline modification. The propeptide occupies 107-116 (LRVVNNKFTN). Hydroxyproline is present on residues Pro-120, Pro-123, and Pro-127. Pro-132 is a propeptide.

The protein belongs to the C-terminally encoded plant signaling peptide (CEP) family. Interacts with CEP receptors (e.g. CEPR1 and CEPR2). The mature small signaling peptide is generated by proteolytic processing of the longer precursor.

It localises to the secreted. The protein resides in the extracellular space. The protein localises to the apoplast. Functionally, extracellular signaling peptide that may regulate primary root growth rate and systemic nitrogen (N)-demand signaling. The polypeptide is Precursor of CEP10 (Arabidopsis thaliana (Mouse-ear cress)).